The primary structure comprises 170 residues: Protein SprT (170 aa).

Residues leucine 22 to arginine 163 form the SprT-like domain. Position 78 (histidine 78) interacts with Zn(2+). Residue glutamate 79 is part of the active site. Histidine 82 is a Zn(2+) binding site.

Belongs to the SprT family. Zn(2+) is required as a cofactor.

It localises to the cytoplasm. The chain is Protein SprT from Pectobacterium carotovorum subsp. carotovorum (strain PC1).